A 111-amino-acid polypeptide reads, in one-letter code: UPF0060 membrane protein Krad_3114 (111 aa).

A run of 4 helical transmembrane segments spans residues 7–27 (IALFVLAALLEIGGAWLVWQG), 33–53 (GLAWIGAGVIALGLYGFAATL), 62–82 (VLAAYGGVFVAGSLLWAAVVD), and 88–108 (RFDVAGALVCLVGVGIVMYAP).

The protein belongs to the UPF0060 family.

Its subcellular location is the cell membrane. This is UPF0060 membrane protein Krad_3114 from Kineococcus radiotolerans (strain ATCC BAA-149 / DSM 14245 / SRS30216).